The following is a 360-amino-acid chain: Alanine racemase (360 aa).

Lys34 (proton acceptor; specific for D-alanine) is an active-site residue. Position 34 is an N6-(pyridoxal phosphate)lysine (Lys34). Residue Arg129 coordinates substrate. Residue Tyr254 is the Proton acceptor; specific for L-alanine of the active site. Met302 is a binding site for substrate.

Belongs to the alanine racemase family. Pyridoxal 5'-phosphate is required as a cofactor.

It carries out the reaction L-alanine = D-alanine. The protein operates within amino-acid biosynthesis; D-alanine biosynthesis; D-alanine from L-alanine: step 1/1. Its function is as follows. Catalyzes the interconversion of L-alanine and D-alanine. May also act on other amino acids. In Pectobacterium atrosepticum (strain SCRI 1043 / ATCC BAA-672) (Erwinia carotovora subsp. atroseptica), this protein is Alanine racemase (alr).